The chain runs to 206 residues: Large ribosomal subunit protein uL4 (206 aa).

A disordered region spans residues 45–76 (RQGTQSAKTRTEVSGGGIKPWRQKGTGRARQG).

Belongs to the universal ribosomal protein uL4 family. Part of the 50S ribosomal subunit.

One of the primary rRNA binding proteins, this protein initially binds near the 5'-end of the 23S rRNA. It is important during the early stages of 50S assembly. It makes multiple contacts with different domains of the 23S rRNA in the assembled 50S subunit and ribosome. Its function is as follows. Forms part of the polypeptide exit tunnel. The chain is Large ribosomal subunit protein uL4 from Clostridium acetobutylicum (strain ATCC 824 / DSM 792 / JCM 1419 / IAM 19013 / LMG 5710 / NBRC 13948 / NRRL B-527 / VKM B-1787 / 2291 / W).